Here is a 610-residue protein sequence, read N- to C-terminus: Zinc metalloproteinase-disintegrin-like 4a (610 aa).

The signal sequence occupies residues 1-20; the sequence is MIQVLLVTISLAVFPYQGSS. Positions 21 to 189 are excised as a propeptide; it reads VILESGNVND…KKASQSNLTP (169 aa). Positions 199-395 constitute a Peptidase M12B domain; it reads KYVKLFLVAD…NMPQCILKKP (197 aa). An N-linked (GlcNAc...) asparagine glycan is attached at Asn218. A Ca(2+)-binding site is contributed by Asp286. 3 cysteine pairs are disulfide-bonded: Cys310–Cys390, Cys350–Cys374, and Cys352–Cys357. His335 contributes to the Zn(2+) binding site. The active site involves Glu336. Positions 339 and 345 each coordinate Zn(2+). Ca(2+)-binding residues include Cys390, Val405, Asn408, Phe410, Glu412, Glu415, and Asp418. In terms of domain architecture, Disintegrin spans 403–488; the sequence is PAVCGNYFVE…AECTDSFQRN (86 aa). Cystine bridges form between Cys406–Cys435, Cys417–Cys430, Cys419–Cys425, Cys429–Cys452, Cys443–Cys449, Cys448–Cys474, Cys461–Cys481, Cys468–Cys499, Cys492–Cys504, Cys511–Cys561, Cys526–Cys572, Cys539–Cys549, Cys556–Cys598, and Cys592–Cys603. The D/ECD-tripeptide signature appears at 467 to 469; the sequence is ECD.

Belongs to the venom metalloproteinase (M12B) family. P-III subfamily. The cofactor is Zn(2+). Expressed by the venom gland.

It is found in the secreted. Snake venom metalloproteinase that impairs hemostasis in the envenomed animal. The chain is Zinc metalloproteinase-disintegrin-like 4a from Crotalus adamanteus (Eastern diamondback rattlesnake).